We begin with the raw amino-acid sequence, 278 residues long: Dermonecrotic toxin LspiSicTox-betaIE2i (278 aa).

Histidine 5 is a catalytic residue. Mg(2+)-binding residues include glutamate 25 and aspartate 27. The Nucleophile role is filled by histidine 41. Intrachain disulfides connect cysteine 45–cysteine 51 and cysteine 47–cysteine 190. Residue glutamate 85 participates in Mg(2+) binding.

The protein belongs to the arthropod phospholipase D family. Class II subfamily. It depends on Mg(2+) as a cofactor. In terms of tissue distribution, expressed by the venom gland.

The protein resides in the secreted. It catalyses the reaction an N-(acyl)-sphingosylphosphocholine = an N-(acyl)-sphingosyl-1,3-cyclic phosphate + choline. The enzyme catalyses an N-(acyl)-sphingosylphosphoethanolamine = an N-(acyl)-sphingosyl-1,3-cyclic phosphate + ethanolamine. The catalysed reaction is a 1-acyl-sn-glycero-3-phosphocholine = a 1-acyl-sn-glycero-2,3-cyclic phosphate + choline. It carries out the reaction a 1-acyl-sn-glycero-3-phosphoethanolamine = a 1-acyl-sn-glycero-2,3-cyclic phosphate + ethanolamine. Functionally, dermonecrotic toxins cleave the phosphodiester linkage between the phosphate and headgroup of certain phospholipids (sphingolipid and lysolipid substrates), forming an alcohol (often choline) and a cyclic phosphate. This toxin acts on sphingomyelin (SM). It may also act on ceramide phosphoethanolamine (CPE), lysophosphatidylcholine (LPC) and lysophosphatidylethanolamine (LPE), but not on lysophosphatidylserine (LPS), and lysophosphatidylglycerol (LPG). It acts by transphosphatidylation, releasing exclusively cyclic phosphate products as second products. Induces dermonecrosis, hemolysis, increased vascular permeability, edema, inflammatory response, and platelet aggregation. The protein is Dermonecrotic toxin LspiSicTox-betaIE2i of Loxosceles spinulosa (Recluse spider).